Consider the following 353-residue polypeptide: Ornithine racemase (353 aa).

Catalysis depends on Lys-35, which acts as the Proton acceptor. An N6-(pyridoxal phosphate)lysine modification is found at Lys-35. Arg-128 contacts substrate.

This sequence belongs to the alanine racemase family. In terms of assembly, homodimer. Pyridoxal 5'-phosphate is required as a cofactor.

It carries out the reaction L-ornithine = D-ornithine. Its function is as follows. Involved in the ornithine fermentation pathway. Catalyzes the conversion of L-ornithine to D-ornithine. OR could also racemize basic amino acids such as lysine and arginine. Serine, asparagine and alanine could be also converted by OR, but at a lower rate. This is Ornithine racemase from Acetoanaerobium sticklandii (strain ATCC 12662 / DSM 519 / JCM 1433 / CCUG 9281 / NCIMB 10654 / HF) (Clostridium sticklandii).